The sequence spans 688 residues: Methionine--tRNA ligase (688 aa).

Residues 13 to 23 (PYANGNFHIGH) carry the 'HIGH' region motif. Positions 144, 147, 157, and 160 each coordinate Zn(2+). The 'KMSKS' region signature appears at 342 to 346 (KMSKS). K345 is a binding site for ATP. Residues 582 to 688 (DFAKVDLRIA…PGAQPGMRIH (107 aa)) form the tRNA-binding domain.

Belongs to the class-I aminoacyl-tRNA synthetase family. MetG type 1 subfamily. As to quaternary structure, homodimer. Zn(2+) is required as a cofactor.

The protein resides in the cytoplasm. It carries out the reaction tRNA(Met) + L-methionine + ATP = L-methionyl-tRNA(Met) + AMP + diphosphate. In terms of biological role, is required not only for elongation of protein synthesis but also for the initiation of all mRNA translation through initiator tRNA(fMet) aminoacylation. This is Methionine--tRNA ligase from Acidovorax ebreus (strain TPSY) (Diaphorobacter sp. (strain TPSY)).